The following is a 471-amino-acid chain: Glutamate--tRNA ligase (471 aa).

The 'HIGH' region signature appears at 9–19; that stretch reads PSPTGYLHVGG. Cys98, Cys100, Cys125, and His127 together coordinate Zn(2+). The 'KMSKS' region signature appears at 237 to 241; the sequence is KLSKR. Residue Lys240 coordinates ATP.

The protein belongs to the class-I aminoacyl-tRNA synthetase family. Glutamate--tRNA ligase type 1 subfamily. As to quaternary structure, monomer. Zn(2+) is required as a cofactor.

The protein localises to the cytoplasm. The enzyme catalyses tRNA(Glu) + L-glutamate + ATP = L-glutamyl-tRNA(Glu) + AMP + diphosphate. Functionally, catalyzes the attachment of glutamate to tRNA(Glu) in a two-step reaction: glutamate is first activated by ATP to form Glu-AMP and then transferred to the acceptor end of tRNA(Glu). The protein is Glutamate--tRNA ligase of Salmonella gallinarum (strain 287/91 / NCTC 13346).